The primary structure comprises 419 residues: Serine hydroxymethyltransferase (419 aa).

Residues L121 and 125–127 (GHL) contribute to the (6S)-5,6,7,8-tetrahydrofolate site. K230 bears the N6-(pyridoxal phosphate)lysine mark. 355–357 (SPF) serves as a coordination point for (6S)-5,6,7,8-tetrahydrofolate.

Belongs to the SHMT family. As to quaternary structure, homodimer. Requires pyridoxal 5'-phosphate as cofactor.

The protein localises to the cytoplasm. The enzyme catalyses (6R)-5,10-methylene-5,6,7,8-tetrahydrofolate + glycine + H2O = (6S)-5,6,7,8-tetrahydrofolate + L-serine. The protein operates within one-carbon metabolism; tetrahydrofolate interconversion. It participates in amino-acid biosynthesis; glycine biosynthesis; glycine from L-serine: step 1/1. Functionally, catalyzes the reversible interconversion of serine and glycine with tetrahydrofolate (THF) serving as the one-carbon carrier. This reaction serves as the major source of one-carbon groups required for the biosynthesis of purines, thymidylate, methionine, and other important biomolecules. Also exhibits THF-independent aldolase activity toward beta-hydroxyamino acids, producing glycine and aldehydes, via a retro-aldol mechanism. This is Serine hydroxymethyltransferase from Streptococcus equi subsp. zooepidemicus (strain MGCS10565).